The chain runs to 332 residues: MASADRQMIGDATLAYDPRAKQKAAAKLARIPIKVEPGERLKKPDWIRVKAASPGTRFDDIKRILREHRLHTVCEEASCPNIGECFGKGTATFMIMGDKCTRRCPFCDVGHGRPDPLDQDEPMNLARTVAALALEYVVITSVDRDDLRDGGSGHFVDCIQSIRKLSPQTRIEILVPDFRGRDDRALAILQAAPPDVMNHNLETAPRLYPQARPGSDYRFSLNLLKKFKALHPTVPTKSGIMVGLGETDEEILQVMRDMRAHGIEMLTIGQYLAPSSSHLPVRRYVHPDDFRMFEQEAYRMGFSHAAVGAMVRSSYHADRQAQAAGLHVNAPK.

C74, C79, C85, C100, C104, C107, and S314 together coordinate [4Fe-4S] cluster. A Radical SAM core domain is found at 85 to 303; the sequence is CFGKGTATFM…EQEAYRMGFS (219 aa).

The protein belongs to the radical SAM superfamily. Lipoyl synthase family. Requires [4Fe-4S] cluster as cofactor.

It localises to the cytoplasm. It carries out the reaction [[Fe-S] cluster scaffold protein carrying a second [4Fe-4S](2+) cluster] + N(6)-octanoyl-L-lysyl-[protein] + 2 oxidized [2Fe-2S]-[ferredoxin] + 2 S-adenosyl-L-methionine + 4 H(+) = [[Fe-S] cluster scaffold protein] + N(6)-[(R)-dihydrolipoyl]-L-lysyl-[protein] + 4 Fe(3+) + 2 hydrogen sulfide + 2 5'-deoxyadenosine + 2 L-methionine + 2 reduced [2Fe-2S]-[ferredoxin]. The protein operates within protein modification; protein lipoylation via endogenous pathway; protein N(6)-(lipoyl)lysine from octanoyl-[acyl-carrier-protein]: step 2/2. Catalyzes the radical-mediated insertion of two sulfur atoms into the C-6 and C-8 positions of the octanoyl moiety bound to the lipoyl domains of lipoate-dependent enzymes, thereby converting the octanoylated domains into lipoylated derivatives. The protein is Lipoyl synthase of Verminephrobacter eiseniae (strain EF01-2).